The chain runs to 718 residues: Amino-acid acetyltransferase, mitochondrial (718 aa).

Residues 1 to 36 (MNPNAVWPRTAQSSLKKHQVSLCTCQRRSHYRLRSF) constitute a mitochondrion transit peptide. Residues 97–116 (QHQPDLPQKPTSAPASTAKI) form a disordered region. Residues 539-708 (RQPRLRLDDP…YEAVCRSIQP (170 aa)) enclose the N-acetyltransferase domain.

The protein belongs to the acetyltransferase family.

The protein resides in the mitochondrion. It catalyses the reaction L-glutamate + acetyl-CoA = N-acetyl-L-glutamate + CoA + H(+). It participates in amino-acid biosynthesis; L-arginine biosynthesis; N(2)-acetyl-L-ornithine from L-glutamate: step 1/4. Its function is as follows. N-acetylglutamate synthase involved in arginine biosynthesis. The protein is Amino-acid acetyltransferase, mitochondrial (arg2) of Aspergillus clavatus (strain ATCC 1007 / CBS 513.65 / DSM 816 / NCTC 3887 / NRRL 1 / QM 1276 / 107).